Reading from the N-terminus, the 133-residue chain is Ribosome-binding factor A (133 aa).

The protein belongs to the RbfA family. In terms of assembly, monomer. Binds 30S ribosomal subunits, but not 50S ribosomal subunits or 70S ribosomes.

The protein resides in the cytoplasm. Functionally, one of several proteins that assist in the late maturation steps of the functional core of the 30S ribosomal subunit. Associates with free 30S ribosomal subunits (but not with 30S subunits that are part of 70S ribosomes or polysomes). Required for efficient processing of 16S rRNA. May interact with the 5'-terminal helix region of 16S rRNA. The sequence is that of Ribosome-binding factor A from Chelativorans sp. (strain BNC1).